The primary structure comprises 333 residues: 4-hydroxy-3-methylbut-2-enyl diphosphate reductase (333 aa).

Cysteine 34 is a [4Fe-4S] cluster binding site. Residues histidine 63 and histidine 96 each contribute to the (2E)-4-hydroxy-3-methylbut-2-enyl diphosphate site. Dimethylallyl diphosphate-binding residues include histidine 63 and histidine 96. Histidine 63 and histidine 96 together coordinate isopentenyl diphosphate. Cysteine 118 is a binding site for [4Fe-4S] cluster. Histidine 146 serves as a coordination point for (2E)-4-hydroxy-3-methylbut-2-enyl diphosphate. Histidine 146 provides a ligand contact to dimethylallyl diphosphate. Histidine 146 provides a ligand contact to isopentenyl diphosphate. The Proton donor role is filled by glutamate 148. Threonine 186 lines the (2E)-4-hydroxy-3-methylbut-2-enyl diphosphate pocket. Residue cysteine 216 coordinates [4Fe-4S] cluster. Residues serine 244, serine 245, asparagine 246, and serine 289 each coordinate (2E)-4-hydroxy-3-methylbut-2-enyl diphosphate. Dimethylallyl diphosphate-binding residues include serine 244, serine 245, asparagine 246, and serine 289. 4 residues coordinate isopentenyl diphosphate: serine 244, serine 245, asparagine 246, and serine 289.

Belongs to the IspH family. [4Fe-4S] cluster is required as a cofactor.

The enzyme catalyses isopentenyl diphosphate + 2 oxidized [2Fe-2S]-[ferredoxin] + H2O = (2E)-4-hydroxy-3-methylbut-2-enyl diphosphate + 2 reduced [2Fe-2S]-[ferredoxin] + 2 H(+). It carries out the reaction dimethylallyl diphosphate + 2 oxidized [2Fe-2S]-[ferredoxin] + H2O = (2E)-4-hydroxy-3-methylbut-2-enyl diphosphate + 2 reduced [2Fe-2S]-[ferredoxin] + 2 H(+). It functions in the pathway isoprenoid biosynthesis; dimethylallyl diphosphate biosynthesis; dimethylallyl diphosphate from (2E)-4-hydroxy-3-methylbutenyl diphosphate: step 1/1. The protein operates within isoprenoid biosynthesis; isopentenyl diphosphate biosynthesis via DXP pathway; isopentenyl diphosphate from 1-deoxy-D-xylulose 5-phosphate: step 6/6. In terms of biological role, catalyzes the conversion of 1-hydroxy-2-methyl-2-(E)-butenyl 4-diphosphate (HMBPP) into a mixture of isopentenyl diphosphate (IPP) and dimethylallyl diphosphate (DMAPP). Acts in the terminal step of the DOXP/MEP pathway for isoprenoid precursor biosynthesis. The protein is 4-hydroxy-3-methylbut-2-enyl diphosphate reductase of Mycolicibacterium gilvum (strain PYR-GCK) (Mycobacterium gilvum (strain PYR-GCK)).